The chain runs to 600 residues: Kelch-like protein 24 (600 aa).

The 68-residue stretch at 66 to 133 (TDVIICVEGK…VYTGKVKITT (68 aa)) folds into the BTB domain. The 103-residue stretch at 168-270 (CLGIQRFADT…HPNYFVQTVE (103 aa)) folds into the BACK domain. 6 Kelch repeats span residues 314 to 363 (VIVV…ALRN), 365 to 407 (ILVS…VLLG), 408 to 454 (KVYV…SCIG), 456 to 502 (LFVI…SLNN), 504 to 544 (IYVA…VCNG), and 546 to 592 (IYIL…TIHR).

As to quaternary structure, forms homodimers. Interacts with GRIK2. Component of the BCR(KLHL24) E3 ubiquitin ligase complex, composed of CUL3, RBX1 and KLHL24. Interacts with CUL3. Interacts with KRT14. In terms of processing, autoubiquitinated. Autoubiquitination leads to proteasomal degradation and is necessary to control KLHL24 levels. As to expression, expressed in the brain.

It localises to the perikaryon. The protein localises to the cell projection. The protein resides in the axon. It is found in the cytoplasm. Its subcellular location is the cell junction. It localises to the desmosome. The protein localises to the adherens junction. Its function is as follows. Controls KRT14 levels during keratinocytes differentiation. As part of the BCR(KLHL24) E3 ubiquitin ligase complex, mediates ubiquitination of KRT14. Specifically reduces kainate receptor-mediated currents in hippocampal neurons, most probably by modulating channel properties. Has a crucial role in cardiac development and function. The protein is Kelch-like protein 24 (Klhl24) of Mus musculus (Mouse).